A 292-amino-acid polypeptide reads, in one-letter code: Aquaporin-3 (292 aa).

Topologically, residues 1–24 (MGRQKELMNRCGEMLHIRYRLLRQ) are cytoplasmic. The chain crosses the membrane as a helical span at residues 25–42 (ALAECLGTLILVMFGCGS). Residues 43–56 (VAQVVLSRGTHGGF) lie on the Extracellular side of the membrane. The helical transmembrane segment at 57 to 74 (LTINLAFGFAVTLAILVA) threads the bilayer. Over 75 to 78 (GQVS) the chain is Cytoplasmic. Positions 79-92 (GAHLNPAVTFAMCF) form an intramembrane region, discontinuously helical. Residues 83 to 85 (NPA) carry the NPA 1 motif. Over 93–100 (LAREPWIK) the chain is Cytoplasmic. The helical transmembrane segment at 101–121 (LPIYTLAQTLGAFLGAGIVFG) threads the bilayer. Over 122 to 159 (LYYDAIWAFAGNELVVSGPNGTAGIFATYPSGHLDMVN) the chain is Extracellular. An N-linked (GlcNAc...) asparagine glycan is attached at Asn141. Residues 160–177 (GFFDQFIGTAALIVCVLA) traverse the membrane as a helical segment. At 178–189 (IVDPYNNPVPRG) the chain is on the cytoplasmic side. The chain crosses the membrane as a helical span at residues 190 to 206 (LEAFTVGLVVLVIGTSM). Over 207–210 (GFNS) the chain is Extracellular. Positions 211-224 (GYAVNPARDFGPRL) form an intramembrane region, discontinuously helical. An NPA 2 motif is present at residues 215 to 217 (NPA). Over 225 to 242 (FTALAGWGSEVFTTGQNW) the chain is Extracellular. Residues 243–264 (WWVPIVSPLLGSIGGVFVYQLM) form a helical membrane-spanning segment. The Cytoplasmic segment spans residues 265-292 (IGCHLEQPPPSTEAENVKLAHMKHKEQI).

It belongs to the MIP/aquaporin (TC 1.A.8) family. Homotetramer; each monomer provides an independent glycerol/water pore. Could also exist in other oligomeric states. In terms of tissue distribution, detected in kidney medulla and papilla, in collecting duct cells. Detected in colon.

It is found in the cell membrane. It localises to the basolateral cell membrane. It catalyses the reaction glycerol(in) = glycerol(out). The enzyme catalyses H2O(in) = H2O(out). The catalysed reaction is urea(in) = urea(out). It carries out the reaction H2O2(out) = H2O2(in). Its activity is regulated as follows. Channel activity is inhibited by mercury ions. Its function is as follows. Aquaglyceroporins form homotetrameric transmembrane channels, with each monomer independently mediating glycerol and water transport across the plasma membrane along their osmotic gradient. Could also be permeable to urea. Also participates in cell permeability to H2O2 and H2O2-mediated signaling. In skin, transports glycerol to the epidermis and stratum corneum, where it maintains hydration, elasticity, and supports lipid biosynthesis for barrier repair. In kidney, contributes to the reabsorption of water, helping the body maintain proper fluid balance. The polypeptide is Aquaporin-3 (Rattus norvegicus (Rat)).